Here is a 241-residue protein sequence, read N- to C-terminus: 7-cyano-7-deazaguanine synthase (241 aa).

9-19 (LSGGLDSSTVL) provides a ligand contact to ATP. Positions 189, 197, 200, and 203 each coordinate Zn(2+).

Belongs to the QueC family. Zn(2+) serves as cofactor.

The catalysed reaction is 7-carboxy-7-deazaguanine + NH4(+) + ATP = 7-cyano-7-deazaguanine + ADP + phosphate + H2O + H(+). It participates in purine metabolism; 7-cyano-7-deazaguanine biosynthesis. Catalyzes the ATP-dependent conversion of 7-carboxy-7-deazaguanine (CDG) to 7-cyano-7-deazaguanine (preQ(0)). The polypeptide is 7-cyano-7-deazaguanine synthase (Thermoplasma volcanium (strain ATCC 51530 / DSM 4299 / JCM 9571 / NBRC 15438 / GSS1)).